Consider the following 347-residue polypeptide: GMP reductase (347 aa).

An NADP(+)-binding site is contributed by 108 to 131; the sequence is ADFIKLSEILAMSEELNFICIDIA. 2 residues coordinate K(+): G181 and G183. The active-site Thioimidate intermediate is the C186. 216 to 239 contributes to the NADP(+) binding site; that stretch reads IIGDGGCSCAGDVAKAFGGGADFV.

The protein belongs to the IMPDH/GMPR family. GuaC type 1 subfamily. Homotetramer.

It carries out the reaction IMP + NH4(+) + NADP(+) = GMP + NADPH + 2 H(+). Functionally, catalyzes the irreversible NADPH-dependent deamination of GMP to IMP. It functions in the conversion of nucleobase, nucleoside and nucleotide derivatives of G to A nucleotides, and in maintaining the intracellular balance of A and G nucleotides. In Shewanella halifaxensis (strain HAW-EB4), this protein is GMP reductase.